We begin with the raw amino-acid sequence, 764 residues long: Chloride anion exchanger (764 aa).

The Cytoplasmic portion of the chain corresponds to 1-76; the sequence is MIEPFGNQYI…YRLKEWLLSD (76 aa). The chain crosses the membrane as a helical span at residues 77-97; the sequence is IVSGISTGIVAVLQGLAFALL. Topologically, residues 98–99 are extracellular; that stretch reads VD. Residues 100–120 form a helical membrane-spanning segment; sequence IPPVYGLYASFFPAIIYLFFG. The Cytoplasmic portion of the chain corresponds to 121–124; sequence TSRH. A helical transmembrane segment spans residues 125–145; the sequence is ISVGPFPILSMMVGLAVSGAV. At 146-175 the chain is on the extracellular side; that stretch reads SKAVPDRNATTLGLPNNSNNSSLLDDERVR. Residues asparagine 153, asparagine 161, and asparagine 165 are each glycosylated (N-linked (GlcNAc...) asparagine). Residues 176-196 form a helical membrane-spanning segment; sequence VAAAASVTVLSGIIQLAFGIL. A topological domain (cytoplasmic) is located at residue arginine 197. A helical membrane pass occupies residues 198–218; sequence IGFVVIYLSESLISGFTTAAA. Residues 219-257 lie on the Extracellular side of the membrane; that stretch reads VHVLVSQLKFIFQLTVPSHTDPVSIFKVLYSVFSQIEKT. A helical transmembrane segment spans residues 258 to 278; sequence NIADLVTALIVLLVVSIVKEI. The Cytoplasmic segment spans residues 279–342; it reads NQRFKDKLPV…VETFQNTVGD (64 aa). Residues 343–363 traverse the membrane as a helical segment; it reads CFGIAMVAFAVAFSVASVYSL. Residues 364–374 lie on the Extracellular side of the membrane; sequence KYDYPLDGNQE. Residues 375 to 395 form a helical membrane-spanning segment; it reads LIALGLGNIVCGVFRGFAGST. The Cytoplasmic segment spans residues 396–411; the sequence is ALSRSAVQESTGGKTQ. Residues 412 to 432 form a helical membrane-spanning segment; sequence IAGLIGAIIVLIVVLAIGFLL. Topologically, residues 433–469 are extracellular; the sequence is APLQKSVLAALALGNLKGMLMQFAEIGRLWRKDKYDC. Residues 470–490 form a helical membrane-spanning segment; sequence LIWIMTFIFTIVLGLGLGLAA. Residues 491-701 lie on the Cytoplasmic side of the membrane; sequence SVAFQLLTIV…EKLNRYEFFD (211 aa). In terms of domain architecture, STAS spans 525 to 720; that stretch reads DYYDMYEPEG…LTIHDAVLHI (196 aa). Residues 761–764 carry the PDZ-binding motif; sequence ETKF.

It belongs to the SLC26A/SulP transporter (TC 2.A.53) family. Interacts with CFTR, SLC26A6 and NHERF1. Interacts with PDZK1. Interacts (via PDZ-binding motif) with NHERF4 (via the third PDZ domain); interaction leads to decreased expression of SLC26A3 on the cell membrane resulting in its reduced exchanger activity. Post-translationally, N-glycosylation is required for efficient cell surface expression, and protection from proteolytic degradation. As to expression, expressed in the colon. Expression is significantly decreased in adenomas (polyps) and adenocarcinomas of the colon.

The protein resides in the apical cell membrane. It is found in the membrane. Its subcellular location is the cell membrane. The catalysed reaction is hydrogencarbonate(in) + 2 chloride(out) = hydrogencarbonate(out) + 2 chloride(in). Its activity is regulated as follows. Inhibited by acidic pH. In terms of biological role, mediates chloride-bicarbonate exchange with a chloride bicarbonate stoichiometry of 2:1 in the intestinal epithelia. Plays a role in the chloride and bicarbonate homeostasis during sperm epididymal maturation and capacitation. The sequence is that of Chloride anion exchanger (SLC26A3) from Homo sapiens (Human).